The following is a 304-amino-acid chain: Protein BOBBER 1 (304 aa).

The residue at position 2 (Ala2) is an N-acetylalanine. Positions 54–106 (EDEIVVAVRAAKEKLKKAEKKKAEKESVKPVEKKAEKEIVKLVEKKVEKESVK) form a coiled coil. Positions 111-141 (ASSAEPIEVEKPKEEEEKKESGPIVPNKGNG) are disordered. Residues 118 to 131 (EVEKPKEEEEKKES) show a composition bias toward basic and acidic residues. A CS domain is found at 142–231 (TDLENYSWIQ…DQMEWWKCCV (90 aa)).

In terms of tissue distribution, expressed in all seedling tissues with highest expression levels at the root tip.

It localises to the cytoplasm. The protein localises to the cytoplasmic granule. In terms of biological role, small heat shock protein required for the establishment of auxin gradients and for patterning of the apical domain of the embryo. Involved in the specification of the cotyledon primordia. Also required for normal inflorescence and floral meristem function, normal developmental patterning and thermotolerance. Acts as a molecular chaperone. The protein is Protein BOBBER 1 (BOB1) of Arabidopsis thaliana (Mouse-ear cress).